The sequence spans 86 residues: Apolipoprotein C-I (86 aa).

Residues 1 to 26 (MRLFLSLPVLVVALLTILEGPGPAQG) form the signal peptide.

The protein belongs to the apolipoprotein C1 family.

The protein resides in the secreted. Inhibitor of lipoprotein binding to the low density lipoprotein (LDL) receptor, LDL receptor-related protein, and very low density lipoprotein (VLDL) receptor. Associates with high density lipoproteins (HDL) and the triacylglycerol-rich lipoproteins in the plasma and makes up about 10% of the protein of the VLDL and 2% of that of HDL. Appears to interfere directly with fatty acid uptake and is also the major plasma inhibitor of cholesteryl ester transfer protein (CETP). Binds free fatty acids and reduces their intracellular esterification. Modulates the interaction of APOE with beta-migrating VLDL and inhibits binding of beta-VLDL to the LDL receptor-related protein. The sequence is that of Apolipoprotein C-I (APOC1) from Plecturocebus moloch (Dusky titi monkey).